We begin with the raw amino-acid sequence, 476 residues long: ATP synthase subunit beta (476 aa).

An ATP-binding site is contributed by 154–161 (GGAGVGKT).

The protein belongs to the ATPase alpha/beta chains family. F-type ATPases have 2 components, CF(1) - the catalytic core - and CF(0) - the membrane proton channel. CF(1) has five subunits: alpha(3), beta(3), gamma(1), delta(1), epsilon(1). CF(0) has three main subunits: a(1), b(2) and c(9-12). The alpha and beta chains form an alternating ring which encloses part of the gamma chain. CF(1) is attached to CF(0) by a central stalk formed by the gamma and epsilon chains, while a peripheral stalk is formed by the delta and b chains.

It is found in the cell inner membrane. The enzyme catalyses ATP + H2O + 4 H(+)(in) = ADP + phosphate + 5 H(+)(out). Functionally, produces ATP from ADP in the presence of a proton gradient across the membrane. The catalytic sites are hosted primarily by the beta subunits. The chain is ATP synthase subunit beta from Nitrobacter winogradskyi (strain ATCC 25391 / DSM 10237 / CIP 104748 / NCIMB 11846 / Nb-255).